The sequence spans 178 residues: Transcription factor E (178 aa).

The 85-residue stretch at 4 to 88 folds into the HTH TFE/IIEalpha-type domain; that stretch reads AEDLFINLAK…YWKPNIDQIN (85 aa).

This sequence belongs to the TFE family. In terms of assembly, monomer. Interaction with RNA polymerase subunits RpoF and RpoE is necessary for Tfe stimulatory transcription activity. Able to interact with Tbp and RNA polymerase in the absence of DNA promoter. Interacts both with the preinitiation and elongation complexes.

In terms of biological role, transcription factor that plays a role in the activation of archaeal genes transcribed by RNA polymerase. Facilitates transcription initiation by enhancing TATA-box recognition by TATA-box-binding protein (Tbp), and transcription factor B (Tfb) and RNA polymerase recruitment. Not absolutely required for transcription in vitro, but particularly important in cases where Tbp or Tfb function is not optimal. It dynamically alters the nucleic acid-binding properties of RNA polymerases by stabilizing the initiation complex and destabilizing elongation complexes. Seems to translocate with the RNA polymerase following initiation and acts by binding to the non template strand of the transcription bubble in elongation complexes. This is Transcription factor E from Saccharolobus islandicus (strain L.S.2.15 / Lassen #1) (Sulfolobus islandicus).